We begin with the raw amino-acid sequence, 306 residues long: UDP-N-acetylenolpyruvoylglucosamine reductase (306 aa).

The 165-residue stretch at 34–198 (VGGPADLLIT…LEVTFKLHNS (165 aa)) folds into the FAD-binding PCMH-type domain. The active site involves R177. Catalysis depends on S227, which acts as the Proton donor. E297 is a catalytic residue.

It belongs to the MurB family. It depends on FAD as a cofactor.

It localises to the cytoplasm. The catalysed reaction is UDP-N-acetyl-alpha-D-muramate + NADP(+) = UDP-N-acetyl-3-O-(1-carboxyvinyl)-alpha-D-glucosamine + NADPH + H(+). It participates in cell wall biogenesis; peptidoglycan biosynthesis. In terms of biological role, cell wall formation. This Clostridium botulinum (strain Okra / Type B1) protein is UDP-N-acetylenolpyruvoylglucosamine reductase.